A 186-amino-acid polypeptide reads, in one-letter code: Peptidyl-tRNA hydrolase (186 aa).

Residue Tyr-16 coordinates tRNA. The active-site Proton acceptor is the His-21. Positions 60 and 62 each coordinate tRNA.

The protein belongs to the PTH family. Monomer.

It localises to the cytoplasm. The enzyme catalyses an N-acyl-L-alpha-aminoacyl-tRNA + H2O = an N-acyl-L-amino acid + a tRNA + H(+). Functionally, hydrolyzes ribosome-free peptidyl-tRNAs (with 1 or more amino acids incorporated), which drop off the ribosome during protein synthesis, or as a result of ribosome stalling. Catalyzes the release of premature peptidyl moieties from peptidyl-tRNA molecules trapped in stalled 50S ribosomal subunits, and thus maintains levels of free tRNAs and 50S ribosomes. The polypeptide is Peptidyl-tRNA hydrolase (Tropheryma whipplei (strain TW08/27) (Whipple's bacillus)).